The sequence spans 216 residues: Type-4 uracil-DNA glycosylase (216 aa).

Positions 14 and 17 each coordinate [4Fe-4S] cluster. Uracil contacts are provided by residues 41-43 (GEA), Phe-55, and Asn-82. [4Fe-4S] cluster is bound by residues Cys-86 and Cys-102. His-164 serves as a coordination point for uracil.

The protein belongs to the uracil-DNA glycosylase (UDG) superfamily. Type 4 (UDGa) family. Interacts with the sliding clamp PCNA3 subunit.

The enzyme catalyses Hydrolyzes single-stranded DNA or mismatched double-stranded DNA and polynucleotides, releasing free uracil.. Removes uracil bases that are present in DNA as a result of either deamination of cytosine or misincorporation of dUMP instead of dTMP. Can remove uracil from double-stranded DNA containing either a U/G or U/A base pair as well as from single-stranded DNA. The sequence is that of Type-4 uracil-DNA glycosylase from Saccharolobus solfataricus (strain ATCC 35092 / DSM 1617 / JCM 11322 / P2) (Sulfolobus solfataricus).